A 448-amino-acid chain; its full sequence is Trigger factor (448 aa).

The region spanning 161-246 (GDQVTIDFEG…VHKVAGKQLP (86 aa)) is the PPIase FKBP-type domain. The tract at residues 428–448 (ALQAAQQQEGAEEEAQEETSA) is disordered. Residues 437-448 (GAEEEAQEETSA) are compositionally biased toward acidic residues.

This sequence belongs to the FKBP-type PPIase family. Tig subfamily.

It is found in the cytoplasm. The enzyme catalyses [protein]-peptidylproline (omega=180) = [protein]-peptidylproline (omega=0). Its function is as follows. Involved in protein export. Acts as a chaperone by maintaining the newly synthesized protein in an open conformation. Functions as a peptidyl-prolyl cis-trans isomerase. The protein is Trigger factor of Chromohalobacter salexigens (strain ATCC BAA-138 / DSM 3043 / CIP 106854 / NCIMB 13768 / 1H11).